A 109-amino-acid chain; its full sequence is Putative pterin-4-alpha-carbinolamine dehydratase (109 aa).

It belongs to the pterin-4-alpha-carbinolamine dehydratase family.

It catalyses the reaction (4aS,6R)-4a-hydroxy-L-erythro-5,6,7,8-tetrahydrobiopterin = (6R)-L-erythro-6,7-dihydrobiopterin + H2O. The chain is Putative pterin-4-alpha-carbinolamine dehydratase from Rickettsia canadensis (strain McKiel).